Consider the following 874-residue polypeptide: Alanine--tRNA ligase (874 aa).

Residues His-564, His-568, Cys-665, and His-669 each contribute to the Zn(2+) site.

This sequence belongs to the class-II aminoacyl-tRNA synthetase family. Zn(2+) is required as a cofactor.

It localises to the cytoplasm. It catalyses the reaction tRNA(Ala) + L-alanine + ATP = L-alanyl-tRNA(Ala) + AMP + diphosphate. Catalyzes the attachment of alanine to tRNA(Ala) in a two-step reaction: alanine is first activated by ATP to form Ala-AMP and then transferred to the acceptor end of tRNA(Ala). Also edits incorrectly charged Ser-tRNA(Ala) and Gly-tRNA(Ala) via its editing domain. This chain is Alanine--tRNA ligase, found in Burkholderia lata (strain ATCC 17760 / DSM 23089 / LMG 22485 / NCIMB 9086 / R18194 / 383).